A 223-amino-acid polypeptide reads, in one-letter code: Interleukin-12 subunit alpha (223 aa).

Positions 1-23 (MCPSARSLLLLASLVLLEHLGSA) are cleaved as a signal peptide. N-linked (GlcNAc...) asparagine glycosylation is found at asparagine 41, asparagine 79, asparagine 121, and asparagine 176. 2 disulfide bridges follow: cysteine 66–cysteine 200 and cysteine 87–cysteine 125.

Belongs to the IL-6 superfamily. Heterodimer with IL12B; disulfide-linked. This heterodimer is known as interleukin IL-12. Heterodimer with EBI3/IL27B; not disulfide-linked. This heterodimer is known as interleukin IL-35. Interacts with NBR1; this interaction promotes IL-12 secretion.

It is found in the secreted. Functionally, heterodimerizes with IL12B to form the IL-12 cytokine or with EBI3/IL27B to form the IL-35 cytokine. IL-12 is primarily produced by professional antigen-presenting cells (APCs) such as B-cells and dendritic cells (DCs) as well as macrophages and granulocytes and regulates T-cell and natural killer-cell responses, induces the production of interferon-gamma (IFN-gamma), favors the differentiation of T-helper 1 (Th1) cells and is an important link between innate resistance and adaptive immunity. Mechanistically, exerts its biological effects through a receptor composed of IL12R1 and IL12R2 subunits. Binding to the receptor results in the rapid tyrosine phosphorylation of a number of cellular substrates including the JAK family kinases TYK2 and JAK2. In turn, recruited STAT4 gets phosphorylated and translocates to the nucleus where it regulates cytokine/growth factor responsive genes. As part of IL-35, plays essential roles in maintaining the immune homeostasis of the liver microenvironment and also functions as an immune-suppressive cytokine. Mediates biological events through unconventional receptors composed of IL12RB2 and gp130/IL6ST heterodimers or homodimers. Signaling requires the transcription factors STAT1 and STAT4, which form a unique heterodimer that binds to distinct DNA sites. The chain is Interleukin-12 subunit alpha (IL12A) from Marmota monax (Woodchuck).